We begin with the raw amino-acid sequence, 213 residues long: Inactive ribonuclease-like protein 10 (213 aa).

A signal peptide spans 1-24; sequence MKLTLVQIFFMMLLLLLGLGMGLG. N-linked (GlcNAc...) asparagine glycosylation is present at Asn131.

It belongs to the pancreatic ribonuclease family. In terms of processing, the N-terminus is blocked. Glycosylated. Male-specific expression in proximal caput of the epididymis.

The protein localises to the secreted. In terms of biological role, secreted proximal epididymal protein required for post-testicular sperm maturation and male fertility. May be involved in sperm adhesion to the egg zona pellucida. Does not have ribonuclease activity. This chain is Inactive ribonuclease-like protein 10 (RNASE10), found in Equus caballus (Horse).